We begin with the raw amino-acid sequence, 504 residues long: L-arabinose isomerase (504 aa).

4 residues coordinate Mn(2+): Glu308, Glu335, His352, and His452.

The protein belongs to the arabinose isomerase family. Mn(2+) serves as cofactor.

It carries out the reaction beta-L-arabinopyranose = L-ribulose. The protein operates within carbohydrate degradation; L-arabinose degradation via L-ribulose; D-xylulose 5-phosphate from L-arabinose (bacterial route): step 1/3. Its function is as follows. Catalyzes the conversion of L-arabinose to L-ribulose. The chain is L-arabinose isomerase from Bifidobacterium adolescentis (strain ATCC 15703 / DSM 20083 / NCTC 11814 / E194a).